Reading from the N-terminus, the 195-residue chain is BAG family molecular chaperone regulator 1A (195 aa).

Residues 6–72 (STVTIHYGNQ…KLGLKNHSKI (67 aa)) enclose the Ubiquitin-like domain. The tract at residues 78–98 (HKQQRGSKEKDTVEPAPKAEA) is disordered. The segment covering 83–98 (GSKEKDTVEPAPKAEA) has biased composition (basic and acidic residues). In terms of domain architecture, BAG spans 109-190 (EIKAIDQYVD…KMLDHVDQTS (82 aa)).

As to quaternary structure, binds to the ATPase domain of HSP70/HSC chaperones.

Functionally, inhibits the chaperone activity of HSP70/HSC70 by promoting substrate release. The polypeptide is BAG family molecular chaperone regulator 1A (bag101) (Schizosaccharomyces pombe (strain 972 / ATCC 24843) (Fission yeast)).